The sequence spans 103 residues: Protamine-3 (103 aa).

Positions 1-103 (MGSRCAKLNT…QSPEPKRTPS (103 aa)) are disordered. Residues 10 to 21 (TGQSPGHSPGHS) show a composition bias toward low complexity. Residues 50 to 66 (GEEEEEEEEEGEEEEKE) are compositionally biased toward acidic residues. The segment covering 78–90 (EPERQEEGHKDNA) has biased composition (basic and acidic residues). Ser95 is subject to Phosphoserine.

It belongs to the protamine P3 family.

It is found in the nucleus. It localises to the chromosome. Protamines substitute for histones in the chromatin of sperm during the haploid phase of spermatogenesis. They compact sperm DNA into a highly condensed, stable and inactive complex. The chain is Protamine-3 (PRM3) from Homo sapiens (Human).